The following is a 495-amino-acid chain: N-succinylglutamate 5-semialdehyde dehydrogenase (495 aa).

An NAD(+)-binding site is contributed by 228–233; it reads GSYATG. Residues Glu-251 and Cys-285 contribute to the active site.

This sequence belongs to the aldehyde dehydrogenase family. AstD subfamily.

It carries out the reaction N-succinyl-L-glutamate 5-semialdehyde + NAD(+) + H2O = N-succinyl-L-glutamate + NADH + 2 H(+). The protein operates within amino-acid degradation; L-arginine degradation via AST pathway; L-glutamate and succinate from L-arginine: step 4/5. Its function is as follows. Catalyzes the NAD-dependent reduction of succinylglutamate semialdehyde into succinylglutamate. The sequence is that of N-succinylglutamate 5-semialdehyde dehydrogenase from Legionella pneumophila (strain Corby).